The primary structure comprises 223 residues: MEVLVTGGDTDLGRTMAEGFRNDGHKVTLVGARRGDLEVAAKELDVDAVVCDTTDPTSLTEARGLFPRHLDTIVNVPAPSWDAGDPRAYSVSDTANAWRNALDATVLSVVLTVQSVGDHLRSGGSIVSVVAENPPAGGAESAIKAALSNWIAGQAAVFGTRGITINTVACGRSVQTGYEGLSRTPAPVAAEIARLALFLTTPAARHITGQTLHVSHGALAHFG.

Leu4 to Thr28 lines the NADP(+) pocket. Ser128 contacts substrate.

The protein belongs to the short-chain dehydrogenases/reductases (SDR) family.

The chain is Putative oxidoreductase MT1904 from Mycobacterium tuberculosis (strain CDC 1551 / Oshkosh).